We begin with the raw amino-acid sequence, 209 residues long: Small ribosomal subunit protein uS4 (209 aa).

Over residues 1–13 (MSTKSRTRSKTRL) the composition is skewed to basic residues. Disordered regions lie at residues 1–20 (MSTK…LGIP) and 28–49 (YLEK…QDSD). The S4 RNA-binding domain occupies 95–176 (QRLDALVVRS…PKLPSYLEVE (82 aa)).

The protein belongs to the universal ribosomal protein uS4 family. As to quaternary structure, part of the 30S ribosomal subunit. Contacts protein S5. The interaction surface between S4 and S5 is involved in control of translational fidelity.

In terms of biological role, one of the primary rRNA binding proteins, it binds directly to 16S rRNA where it nucleates assembly of the body of the 30S subunit. Functionally, with S5 and S12 plays an important role in translational accuracy. The chain is Small ribosomal subunit protein uS4 from Clavibacter michiganensis subsp. michiganensis (strain NCPPB 382).